The sequence spans 168 residues: Thiol peroxidase (168 aa).

Residues 19–168 form the Thioredoxin domain; it reads PQAGSKAQAF…YDAALNVLKA (150 aa). Cys61 serves as the catalytic Cysteine sulfenic acid (-SOH) intermediate. Cys61 and Cys95 are disulfide-bonded.

It belongs to the peroxiredoxin family. Tpx subfamily. As to quaternary structure, homodimer.

It catalyses the reaction a hydroperoxide + [thioredoxin]-dithiol = an alcohol + [thioredoxin]-disulfide + H2O. Thiol-specific peroxidase that catalyzes the reduction of hydrogen peroxide and organic hydroperoxides to water and alcohols, respectively. Plays a role in cell protection against oxidative stress by detoxifying peroxides. This is Thiol peroxidase from Salmonella typhimurium (strain LT2 / SGSC1412 / ATCC 700720).